Here is a 695-residue protein sequence, read N- to C-terminus: RING finger protein 145 (695 aa).

13 helical membrane-spanning segments follow: residues 53-73 (YLALNMHYVGYILSVVLLTLP), 77-97 (LAKLYLYFVAALLLYAGHQIS), 123-143 (FITALVGQLVVCTLCSCVMKT), 146-166 (IWLFSAHMLPLLARLCLVPIE), 168-188 (IVVINKFAMIFTGLEVLYFLA), 225-245 (LVVPVLFMVFWLVLFALQIYT), 275-295 (YSLLGLVFTVSFVALGVLTLC), 316-336 (TEGVTLLILAVQTGLIELQVV), 340-360 (FLLSIILFIVVASILQSMLEI), 384-404 (SLCLFLLVFPSYMAYMICQFF), 410-430 (LLIIISSSILTSLQVLGTLFI), 460-480 (LLEFLVALCVVAYGVSETVFG), and 482-502 (WTVMGSMIIFIHSYYNVWLRA). The RING-type; atypical zinc-finger motif lies at 537-575 (CSICYQDMNSAVITPCSHFFHPGCLKKWLYVQETCPLCH). Over residues 585 to 603 (ATGESGSSTNPVSEQSATN) the composition is skewed to polar residues. Residues 585 to 610 (ATGESGSSTNPVSEQSATNPPLGPVS) are disordered.

It localises to the membrane. The sequence is that of RING finger protein 145 (rnf145) from Xenopus tropicalis (Western clawed frog).